The sequence spans 384 residues: Chaperone protein DnaJ (384 aa).

The 66-residue stretch at 6 to 71 folds into the J domain; sequence DYYEVLGISK…TKRKTYDQFG (66 aa). A CR-type zinc finger spans residues 141–223; that stretch reads GKKMSIKVNR…CHGTGNTRKV (83 aa). The Zn(2+) site is built by cysteine 154, cysteine 157, cysteine 171, cysteine 174, cysteine 197, cysteine 200, cysteine 211, and cysteine 214. 4 CXXCXGXG motif repeats span residues 154 to 161, 171 to 178, 197 to 204, and 211 to 218; these read CEECNGTG, CSTCNGTG, CSACNGTG, and CSKCHGTG.

This sequence belongs to the DnaJ family. Homodimer. It depends on Zn(2+) as a cofactor.

The protein localises to the cytoplasm. Its function is as follows. Participates actively in the response to hyperosmotic and heat shock by preventing the aggregation of stress-denatured proteins and by disaggregating proteins, also in an autonomous, DnaK-independent fashion. Unfolded proteins bind initially to DnaJ; upon interaction with the DnaJ-bound protein, DnaK hydrolyzes its bound ATP, resulting in the formation of a stable complex. GrpE releases ADP from DnaK; ATP binding to DnaK triggers the release of the substrate protein, thus completing the reaction cycle. Several rounds of ATP-dependent interactions between DnaJ, DnaK and GrpE are required for fully efficient folding. Also involved, together with DnaK and GrpE, in the DNA replication of plasmids through activation of initiation proteins. The chain is Chaperone protein DnaJ from Clostridioides difficile (strain 630) (Peptoclostridium difficile).